Consider the following 202-residue polypeptide: Large ribosomal subunit protein bL25 (202 aa).

Residues 182-202 (QTAPEEEEGTAAETTEPELAE) are disordered. The span at 185 to 202 (PEEEEGTAAETTEPELAE) shows a compositional bias: acidic residues.

It belongs to the bacterial ribosomal protein bL25 family. CTC subfamily. In terms of assembly, part of the 50S ribosomal subunit; part of the 5S rRNA/L5/L18/L25 subcomplex. Contacts the 5S rRNA. Binds to the 5S rRNA independently of L5 and L18.

This is one of the proteins that binds to the 5S RNA in the ribosome where it forms part of the central protuberance. The sequence is that of Large ribosomal subunit protein bL25 from Enterococcus faecalis (strain ATCC 700802 / V583).